A 142-amino-acid chain; its full sequence is MRTDATPTTTADWLGDLDLPTTTPTFKGRKTTQVRLEQRKKFVKILSSRIHYISHPRIGGLECSINLRDVCNVSPGYCALVVKHLMLLCACNPEQIFVNQWRWTVKLKNVAAMKFLSMVFADNANHPLYSLWTHWFNGTEWP.

Belongs to the IIV-6 115R family.

This is an uncharacterized protein from Invertebrate iridescent virus 3 (IIV-3).